Reading from the N-terminus, the 275-residue chain is Cis-2,3-dihydrobiphenyl-2,3-diol dehydrogenase (275 aa).

9–33 (LITGGASGLGRALVDRFVAEAKVAV) contacts NAD(+). A substrate-binding site is contributed by Ser140. The active-site Proton acceptor is the Tyr153.

It belongs to the short-chain dehydrogenases/reductases (SDR) family.

The enzyme catalyses (2R,3S)-3-phenylcyclohexa-3,5-diene-1,2-diol + NAD(+) = biphenyl-2,3-diol + NADH + H(+). It participates in xenobiotic degradation; biphenyl degradation; 2-hydroxy-2,4-pentadienoate and benzoate from biphenyl: step 2/4. The protein is Cis-2,3-dihydrobiphenyl-2,3-diol dehydrogenase (bphB) of Metapseudomonas furukawaii (Pseudomonas furukawaii).